A 175-amino-acid chain; its full sequence is Methylated-DNA--protein-cysteine methyltransferase (175 aa).

Residue C142 is the Nucleophile; methyl group acceptor of the active site.

This sequence belongs to the MGMT family.

The protein resides in the cytoplasm. The enzyme catalyses a 6-O-methyl-2'-deoxyguanosine in DNA + L-cysteinyl-[protein] = S-methyl-L-cysteinyl-[protein] + a 2'-deoxyguanosine in DNA. The catalysed reaction is a 4-O-methyl-thymidine in DNA + L-cysteinyl-[protein] = a thymidine in DNA + S-methyl-L-cysteinyl-[protein]. Involved in the cellular defense against the biological effects of O6-methylguanine (O6-MeG) and O4-methylthymine (O4-MeT) in DNA. Repairs the methylated nucleobase in DNA by stoichiometrically transferring the methyl group to a cysteine residue in the enzyme. This is a suicide reaction: the enzyme is irreversibly inactivated. The sequence is that of Methylated-DNA--protein-cysteine methyltransferase from Thermococcus sibiricus (strain DSM 12597 / MM 739).